We begin with the raw amino-acid sequence, 109 residues long: Small ribosomal subunit protein eS25z (109 aa).

Residues 1–36 form a disordered region; the sequence is MAPKKDKVPPPSSKPAKSGGGKQKKKKWSKGKQKEK. Residues 22-31 show a composition bias toward basic residues; the sequence is KQKKKKWSKG.

This sequence belongs to the eukaryotic ribosomal protein eS25 family.

The protein is Small ribosomal subunit protein eS25z (RPS25A) of Arabidopsis thaliana (Mouse-ear cress).